Here is a 1394-residue protein sequence, read N- to C-terminus: Kinesin-like protein KIF27 (1394 aa).

In terms of domain architecture, Kinesin motor spans 5-341; sequence PIKVAVRIRP…LKYANRARNI (337 aa). 84–91 is a binding site for ATP; it reads GQTGSGKT. 2 coiled-coil regions span residues 352–418 and 493–554; these read QADR…IEQA and QVVF…ELAK. Disordered regions lie at residues 551 to 583 and 642 to 664; these read ELAKRSSSMPTSTKESCGDGPDARAPEKRPHTA and FSDNSDDEDSEGQEKPRVRSRSH. Polar residues predominate over residues 555 to 565; the sequence is RSSSMPTSTKE. Over residues 571-580 the composition is skewed to basic and acidic residues; that stretch reads PDARAPEKRP. Phosphoserine occurs at positions 643, 646, 672, 675, and 704. Positions 709-980 form a coiled coil; it reads LQKLRTSELI…NKKLRSSQAL (272 aa). Position 999 is a phosphoserine (Ser999). Coiled coils occupy residues 1010–1078, 1118–1152, and 1187–1226; these read TEEK…SIQN, NKVINLREAERKQQLQNKEMKMKVLERDNMVHELE, and QDGEGIIETLNKYEDKIQQLEKDLYFYKKTSRDLKKRLKD. A compositionally biased stretch (basic and acidic residues) spans 1267–1280; the sequence is TENTKLNGREKEVD. Positions 1267–1340 are disordered; sequence TENTKLNGRE…SQSPPPPQLQ (74 aa). Composition is skewed to polar residues over residues 1281–1295 and 1310–1320; these read NSSSSLKTPPLTQQI and APSSGQLQSSA. Phosphoserine is present on residues Ser1365 and Ser1387. Residues 1375–1394 are disordered; the sequence is SLGAGVRSVTADSLEEPEES.

It belongs to the TRAFAC class myosin-kinesin ATPase superfamily. Kinesin family. KIF27 subfamily. Interacts with STK36.

Its subcellular location is the cytoplasm. It localises to the cytoskeleton. The protein resides in the cell projection. The protein localises to the cilium. Its function is as follows. Plays an essential role in motile ciliogenesis. In Rattus norvegicus (Rat), this protein is Kinesin-like protein KIF27 (Kif27).